The following is a 129-amino-acid chain: Small ribosomal subunit protein eS6 (129 aa).

It belongs to the eukaryotic ribosomal protein eS6 family.

This Methanocorpusculum labreanum (strain ATCC 43576 / DSM 4855 / Z) protein is Small ribosomal subunit protein eS6.